Here is a 414-residue protein sequence, read N- to C-terminus: Light-independent protochlorophyllide reductase subunit N (414 aa).

Cys16, Cys41, and Cys98 together coordinate [4Fe-4S] cluster.

This sequence belongs to the BchN/ChlN family. Protochlorophyllide reductase is composed of three subunits; BchL, BchN and BchB. Forms a heterotetramer of two BchB and two BchN subunits. [4Fe-4S] cluster serves as cofactor.

It carries out the reaction chlorophyllide a + oxidized 2[4Fe-4S]-[ferredoxin] + 2 ADP + 2 phosphate = protochlorophyllide a + reduced 2[4Fe-4S]-[ferredoxin] + 2 ATP + 2 H2O. It functions in the pathway porphyrin-containing compound metabolism; bacteriochlorophyll biosynthesis (light-independent). Component of the dark-operative protochlorophyllide reductase (DPOR) that uses Mg-ATP and reduced ferredoxin to reduce ring D of protochlorophyllide (Pchlide) to form chlorophyllide a (Chlide). This reaction is light-independent. The NB-protein (BchN-BchB) is the catalytic component of the complex. In Roseiflexus castenholzii (strain DSM 13941 / HLO8), this protein is Light-independent protochlorophyllide reductase subunit N.